Reading from the N-terminus, the 288-residue chain is Solute carrier family 25 member 45 (288 aa).

3 Solcar repeats span residues 1-83 (MPVE…TLLV), 97-191 (PSYM…LCRQ), and 199-286 (PSSA…LLRW). A run of 6 helical transmembrane segments spans residues 6-26 (FVAG…FDTV), 63-83 (IASI…TLLV), 100-120 (MHIF…LAPF), 166-186 (GAWA…ITYE), 202-222 (ATVL…ATPL), and 266-286 (SARA…LLRW).

Belongs to the mitochondrial carrier (TC 2.A.29) family.

It localises to the mitochondrion inner membrane. The sequence is that of Solute carrier family 25 member 45 (SLC25A45) from Homo sapiens (Human).